We begin with the raw amino-acid sequence, 418 residues long: MPSIVVVGANWGDEGKGRIVDFLAENASASIRFQGGNNAGHTVVNDFGTFKLHQLPSGIFNPDCIAVLGPGMVISPSALSEEIAEVKAAGVNVKLCISDRATLCLPLHALEDTLEELRLGDAAYGSTRQGISPAYGDRVMKKGILVGWLNQPDVLLERIQFMLDWKMPQLKALYPSCDFSQTAEEMTQWLLDVTAPWRAFICNVTEPLKALQKQNANLLFEAQLGAGRDLVYGEYPYTTSSNVTAAYAGIGSGLPALRPERVVAVAKSFSSSVGTGTLVTAMEEQDNFRESANEYGAVTGRPRDMGYFDAVATRNGVELQAATEIALTKIDCLSGMKDLKICVAYDGDHSENPIWPQTAALSPVYENMQPWDEDITGCRTFDSLPIAAQQYVERIEALMGVPITMVSVGPEREQMIIR.

Residues 12–18 and 40–42 contribute to the GTP site; these read GDEGKGR and GHT. The active-site Proton acceptor is D13. 2 residues coordinate Mg(2+): D13 and G40. IMP-binding positions include 13–16, 38–41, T127, K141, T239, and R301; these read DEGK and NAGH. The Proton donor role is filled by H41. Position 297–303 (297–303) interacts with substrate; the sequence is AVTGRPR. GTP contacts are provided by residues R303, 329–331, and 407–409; these read KID and SVG.

This sequence belongs to the adenylosuccinate synthetase family. Homodimer. Mg(2+) is required as a cofactor.

The protein localises to the cytoplasm. It carries out the reaction IMP + L-aspartate + GTP = N(6)-(1,2-dicarboxyethyl)-AMP + GDP + phosphate + 2 H(+). Its pathway is purine metabolism; AMP biosynthesis via de novo pathway; AMP from IMP: step 1/2. Its function is as follows. Plays an important role in the de novo pathway of purine nucleotide biosynthesis. Catalyzes the first committed step in the biosynthesis of AMP from IMP. The protein is Adenylosuccinate synthetase 2 of Pseudoalteromonas translucida (strain TAC 125).